The chain runs to 971 residues: Valine--tRNA ligase (971 aa).

Residues 55 to 65 carry the 'HIGH' region motif; it reads PNVTGSLHMGH. Positions 572–576 match the 'KMSKS' region motif; the sequence is KMSKS. Lys575 is a binding site for ATP. Residues 906–933 adopt a coiled-coil conformation; sequence KAELGRLQKDLDKVQKQHDQIASKLANE.

This sequence belongs to the class-I aminoacyl-tRNA synthetase family. ValS type 1 subfamily. As to quaternary structure, monomer.

The protein resides in the cytoplasm. The catalysed reaction is tRNA(Val) + L-valine + ATP = L-valyl-tRNA(Val) + AMP + diphosphate. Its function is as follows. Catalyzes the attachment of valine to tRNA(Val). As ValRS can inadvertently accommodate and process structurally similar amino acids such as threonine, to avoid such errors, it has a 'posttransfer' editing activity that hydrolyzes mischarged Thr-tRNA(Val) in a tRNA-dependent manner. In Acinetobacter baylyi (strain ATCC 33305 / BD413 / ADP1), this protein is Valine--tRNA ligase.